We begin with the raw amino-acid sequence, 335 residues long: Probable calcium-binding protein CML49 (335 aa).

Residues 1-10 (MSGYPPSSQG) are compositionally biased toward low complexity. A disordered region spans residues 1 to 154 (MSGYPPSSQG…PQASYGSPFA (154 aa)). Over residues 30 to 45 (NPPPYGSSGSNPPPPY) the composition is skewed to pro residues. The segment covering 46–63 (GSSASSPYAVPYGAQPAP) has biased composition (low complexity). The segment covering 110-141 (DYGGYGGAPQQSGHGGGYGGAPQQSGHGGGYG) has biased composition (gly residues). EF-hand domains are found at residues 164–199 (GTDPNIVACFQAADRDNSGFIDDKELQGALSSYNQS) and 230–265 (FSLQNWRSIFERFDKDRSGRIDTNELRDALMSLGFS). Residues Asp177, Asp179, Ser181, Glu188, Asp243, Asp245, Ser247, Arg249, and Glu254 each coordinate Ca(2+).

Its function is as follows. Potential calcium sensor. The chain is Probable calcium-binding protein CML49 (CML49) from Arabidopsis thaliana (Mouse-ear cress).